A 1164-amino-acid chain; its full sequence is Hamartin (1164 aa).

Lysine 30 participates in a covalent cross-link: Glycyl lysine isopeptide (Lys-Gly) (interchain with G-Cter in ubiquitin). The interval 403-787 (SDDYVHISLP…QIRQLQHDRE (385 aa)) is mediates interaction with WDR45B. The disordered stretch occupies residues 439–571 (LNDRGSEEPP…ADESPAGDRE (133 aa)). A compositionally biased stretch (basic and acidic residues) spans 474–487 (EKDKEEAAISRELS). Serine 487, serine 505, serine 511, serine 521, and serine 598 each carry phosphoserine. Polar residues predominate over residues 513-530 (PGSQRKTHSAASSSQGAS). Positions 721–997 (RKVIKAAALE…AAEERLDCCN (277 aa)) form a coiled coil. The segment at 1006–1085 (GHNEEASGHN…TTVGSLPSSK (80 aa)) is disordered. Basic and acidic residues predominate over residues 1007–1020 (HNEEASGHNGETKT). Polar residues predominate over residues 1073 to 1085 (SIPTTVGSLPSSK). Residue serine 1100 is modified to Phosphoserine. The interval 1131–1164 (IPLNLDGPHPSPPTPDSVGQLHIMDYNETHHEHS) is disordered. Over residues 1155 to 1164 (DYNETHHEHS) the composition is skewed to basic and acidic residues.

As to quaternary structure, component of the TSC-TBC complex (also named Rhebulator complex), composed of 2 molecules of TSC1, 2 molecules of TSC2 and 1 molecule of TBC1D7. Probably forms a complex composed of chaperones HSP90 and HSP70, co-chaperones STIP1/HOP, CDC37, PPP5C, PTGES3/p23, TSC1 and client protein TSC2. Forms a complex composed of chaperones HSP90 and HSP70, co-chaperones CDC37, PPP5C, TSC1 and client protein TSC2, CDK4, AKT, RAF1 and NR3C1; this complex does not contain co-chaperones STIP1/HOP and PTGES3/p23. Forms a complex containing HSP90AA1, TSC1 and TSC2; TSC1 is required to recruit TCS2 to the complex. Interacts (via C-terminus) with the closed form of HSP90AA1 (via the middle domain and TPR repeat-binding motif). Interacts with DOCK7. Interacts with FBXW5. Interacts with WDR45B. Interacts with RPAP3 and URI1. Post-translationally, phosphorylation at Ser-505 does not affect interaction with TSC2. 'Lys-63'-linked ubiquitinated at Lys-30 by PELI1; the ubiquitination promotes TSC1/TSC2 complex stability. As to expression, highly expressed in skeletal muscle, followed by heart, brain, placenta, pancreas, lung, liver and kidney. Also expressed in embryonic kidney cells.

The protein resides in the lysosome membrane. Its subcellular location is the cytoplasm. It localises to the cytosol. In terms of biological role, non-catalytic component of the TSC-TBC complex, a multiprotein complex that acts as a negative regulator of the canonical mTORC1 complex, an evolutionarily conserved central nutrient sensor that stimulates anabolic reactions and macromolecule biosynthesis to promote cellular biomass generation and growth. The TSC-TBC complex acts as a GTPase-activating protein (GAP) for the small GTPase RHEB, a direct activator of the protein kinase activity of mTORC1. In absence of nutrients, the TSC-TBC complex inhibits mTORC1, thereby preventing phosphorylation of ribosomal protein S6 kinase (RPS6KB1 and RPS6KB2) and EIF4EBP1 (4E-BP1) by the mTORC1 signaling. The TSC-TBC complex is inactivated in response to nutrients, relieving inhibition of mTORC1. Within the TSC-TBC complex, TSC1 stabilizes TSC2 and prevents TSC2 self-aggregation. Acts as a tumor suppressor. Involved in microtubule-mediated protein transport via its ability to regulate mTORC1 signaling. Also acts as a co-chaperone for HSP90AA1 facilitating HSP90AA1 chaperoning of protein clients such as kinases, TSC2 and glucocorticoid receptor NR3C1. Increases ATP binding to HSP90AA1 and inhibits HSP90AA1 ATPase activity. Competes with the activating co-chaperone AHSA1 for binding to HSP90AA1, thereby providing a reciprocal regulatory mechanism for chaperoning of client proteins. Recruits TSC2 to HSP90AA1 and stabilizes TSC2 by preventing the interaction between TSC2 and ubiquitin ligase HERC1. The polypeptide is Hamartin (Homo sapiens (Human)).